Here is a 233-residue protein sequence, read N- to C-terminus: MAKLTKRARLVRDKVEATKEYDFNEAVALLKELATAKFAESVDVAVNLGIDARKSDQNVRGATVLPNGTGKEVRVAVFTQGANAEAAKEAGADIVGMEDLAEQVKKGEMNFDVVVASPDAMRVVGMLGQILGPRGLMPNPKTGTVTPDVATAVKNAKAGQVRYRNDKNGIIHASIGKIAFESNQIEENLAALIEAVKKAKPSSAKGVYIKKISLSTTMGAGITIDQASLTAAS.

Belongs to the universal ribosomal protein uL1 family. Part of the 50S ribosomal subunit.

Its function is as follows. Binds directly to 23S rRNA. The L1 stalk is quite mobile in the ribosome, and is involved in E site tRNA release. Functionally, protein L1 is also a translational repressor protein, it controls the translation of the L11 operon by binding to its mRNA. This chain is Large ribosomal subunit protein uL1, found in Pseudoalteromonas atlantica (strain T6c / ATCC BAA-1087).